A 126-amino-acid polypeptide reads, in one-letter code: Glycine cleavage system H protein (126 aa).

Positions 22–104 constitute a Lipoyl-binding domain; that stretch reads KLRIGITDFA…YEKAWMIVIE (83 aa). At lysine 63 the chain carries N6-lipoyllysine.

It belongs to the GcvH family. In terms of assembly, the glycine cleavage system is composed of four proteins: P, T, L and H. Requires (R)-lipoate as cofactor.

Its function is as follows. The glycine cleavage system catalyzes the degradation of glycine. The H protein shuttles the methylamine group of glycine from the P protein to the T protein. Functionally, is also involved in protein lipoylation via its role as an octanoyl/lipoyl carrier protein intermediate. This is Glycine cleavage system H protein from Oceanobacillus iheyensis (strain DSM 14371 / CIP 107618 / JCM 11309 / KCTC 3954 / HTE831).